A 292-amino-acid chain; its full sequence is Elongation factor Ts (292 aa).

An involved in Mg(2+) ion dislocation from EF-Tu region spans residues 80-83 (TDFV).

It belongs to the EF-Ts family.

The protein resides in the cytoplasm. Functionally, associates with the EF-Tu.GDP complex and induces the exchange of GDP to GTP. It remains bound to the aminoacyl-tRNA.EF-Tu.GTP complex up to the GTP hydrolysis stage on the ribosome. This is Elongation factor Ts from Tolumonas auensis (strain DSM 9187 / NBRC 110442 / TA 4).